A 90-amino-acid polypeptide reads, in one-letter code: Small ribosomal subunit protein uS15c (90 aa).

The protein belongs to the universal ribosomal protein uS15 family. Part of the 30S ribosomal subunit.

Its subcellular location is the plastid. It is found in the chloroplast. The polypeptide is Small ribosomal subunit protein uS15c (rps15) (Citrus sinensis (Sweet orange)).